A 621-amino-acid chain; its full sequence is uncharacterized protein (621 aa).

2 disordered regions span residues 92–134 (FRNS…QINQ) and 268–310 (KINH…DDEI). Low complexity predominate over residues 94 to 134 (NSSNQSSQSNQVNQSNQSSPSSQISPSSQVNKFNQSSQINQ). Over residues 296 to 310 (TNDETNDETDNDDEI) the composition is skewed to acidic residues. A coiled-coil region spans residues 354–401 (ANKIQNKIIQIVETLNAYKNKQSQIAIEAKNKIKHITVSNKEVSENIE).

This is an uncharacterized protein from Acanthamoeba polyphaga mimivirus (APMV).